We begin with the raw amino-acid sequence, 1012 residues long: F-box DNA helicase 1 (1012 aa).

The segment at 1-54 (MHLTADDCEALSRSTEGLSSLTQPLNQRRSRGDVNRGLQPTHRTRTQPGAQGRQ) is disordered. The segment covering 12–27 (SRSTEGLSSLTQPLNQ) has biased composition (polar residues). The 50-residue stretch at 185–234 (QGSIEDLPDEVLRSIFAFLPVTDLYQSLSLVCRRWRIIVGDPWFIPWKKL) folds into the F-box domain. One can recognise a UvrD-like helicase ATP-binding domain in the interval 427–692 (THEQQRILNH…YYLTQSFRFG (266 aa)). An ATP-binding site is contributed by 448-455 (AFAGTGKT).

Belongs to the helicase family. UvrD subfamily. As to quaternary structure, part of the SCF (SKP1-CUL1-F-box) E3 ubiquitin-protein ligase complex SCF(FBH1).

It localises to the nucleus. Its subcellular location is the chromosome. It carries out the reaction Couples ATP hydrolysis with the unwinding of duplex DNA by translocating in the 3'-5' direction.. The enzyme catalyses ATP + H2O = ADP + phosphate + H(+). It functions in the pathway protein modification; protein ubiquitination. 3'-5' DNA helicase and substrate-recognition component of the SCF(FBH1) E3 ubiquitin ligase complex that plays a key role in response to stalled/damaged replication forks. Involved in genome maintenance by acting as an anti-recombinogenic helicase and preventing extensive strand exchange during homologous recombination: promotes RAD51 filament dissolution from stalled forks, thereby inhibiting homologous recombination and preventing excessive recombination. Also promotes cell death and DNA double-strand breakage in response to replication stress: promotes the endonucleolytic DNA cleavage following prolonged replication stress via its helicase activity, possibly to eliminate cells with excessive replication stress. This is F-box DNA helicase 1 from Gallus gallus (Chicken).